The chain runs to 311 residues: Protoheme IX farnesyltransferase (311 aa).

Helical transmembrane passes span Val32–Asp52, Pro53–Leu73, Ile98–Met118, Val120–Ile140, Ile153–Gly173, Phe180–Phe200, Ile226–Ala246, Ile248–Leu268, and Phe285–Ile305.

This sequence belongs to the UbiA prenyltransferase family. Protoheme IX farnesyltransferase subfamily.

It is found in the cell inner membrane. The catalysed reaction is heme b + (2E,6E)-farnesyl diphosphate + H2O = Fe(II)-heme o + diphosphate. Its pathway is porphyrin-containing compound metabolism; heme O biosynthesis; heme O from protoheme: step 1/1. Converts heme B (protoheme IX) to heme O by substitution of the vinyl group on carbon 2 of heme B porphyrin ring with a hydroxyethyl farnesyl side group. The polypeptide is Protoheme IX farnesyltransferase (Bartonella bacilliformis (strain ATCC 35685 / KC583 / Herrer 020/F12,63)).